Reading from the N-terminus, the 86-residue chain is Small ribosomal subunit protein bS16 (86 aa).

This sequence belongs to the bacterial ribosomal protein bS16 family.

The chain is Small ribosomal subunit protein bS16 from Nostoc punctiforme (strain ATCC 29133 / PCC 73102).